The sequence spans 198 residues: Dephospho-CoA kinase (198 aa).

One can recognise a DPCK domain in the interval 4–198; sequence FLGLTGGIAS…LSDLLQEIGR (195 aa). Residue 12–17 participates in ATP binding; sequence ASGKST.

This sequence belongs to the CoaE family.

Its subcellular location is the cytoplasm. It carries out the reaction 3'-dephospho-CoA + ATP = ADP + CoA + H(+). It participates in cofactor biosynthesis; coenzyme A biosynthesis; CoA from (R)-pantothenate: step 5/5. In terms of biological role, catalyzes the phosphorylation of the 3'-hydroxyl group of dephosphocoenzyme A to form coenzyme A. The chain is Dephospho-CoA kinase from Lactobacillus johnsonii (strain CNCM I-12250 / La1 / NCC 533).